The sequence spans 346 residues: Uroporphyrinogen decarboxylase (346 aa).

Residues 21 to 25 (RQAGR), D71, Y146, S201, and H316 each bind substrate.

The protein belongs to the uroporphyrinogen decarboxylase family. Homodimer.

The protein resides in the cytoplasm. It carries out the reaction uroporphyrinogen III + 4 H(+) = coproporphyrinogen III + 4 CO2. The protein operates within porphyrin-containing compound metabolism; protoporphyrin-IX biosynthesis; coproporphyrinogen-III from 5-aminolevulinate: step 4/4. Functionally, catalyzes the decarboxylation of four acetate groups of uroporphyrinogen-III to yield coproporphyrinogen-III. The sequence is that of Uroporphyrinogen decarboxylase from Rickettsia rickettsii (strain Iowa).